Consider the following 647-residue polypeptide: Protein FAM161A (647 aa).

Disordered regions lie at residues 32 to 55 (RELG…TSME) and 143 to 175 (PAQH…GDSE). Residues 152–161 (SRSVSPSLAE) are compositionally biased toward polar residues. Coiled coils occupy residues 243–268 (IKSK…ECQK) and 518–544 (AIRK…VLNK). Disordered stretches follow at residues 504–524 (QTPR…KREK) and 588–647 (DEHV…IEEI). Basic and acidic residues-rich tracts occupy residues 510–524 (ESSK…KREK) and 588–600 (DEHV…KKIP). Residues 613–638 (DLLDDEEDDKYDCESEEAEEEDAYST) show a composition bias toward acidic residues.

It belongs to the FAM161 family.

The protein resides in the cytoplasm. Its subcellular location is the cytoskeleton. It is found in the cilium basal body. It localises to the cell projection. The protein localises to the cilium. The protein resides in the microtubule organizing center. Its subcellular location is the centrosome. It is found in the centriole. Involved in ciliogenesis. The protein is Protein FAM161A (fam161a) of Xenopus laevis (African clawed frog).